A 458-amino-acid chain; its full sequence is Divalent metal cation transporter MntH (458 aa).

The next 11 membrane-spanning stretches (helical) occupy residues 38–58 (GFWKTLMAFMGPGALVAVGYM), 86–106 (LIAMLLQAMAARLGIVTGMDL), 119–139 (GIFLWIVTELAIMATDIAEII), 151–171 (IPLLWGVLITAFDVLLLLLLM), 180–200 (AIVATLVAVILFVFLYEVILA), 223–243 (MLFLALGIVGATVMPHNLYLH), 275–295 (LTIAFVVNCLLLILGAAMFYG), 315–335 (IVGSIASPMLSLLFAVALLAS), 370–390 (GLSILPVIIFTVYYHGNEAQV), 395–415 (IYSQVFLSIALPVSMIPLTLF), and 436–456 (WFVTIVLTLLNIYLILQTVGL).

The protein belongs to the NRAMP family.

The protein resides in the cell membrane. H(+)-stimulated, divalent metal cation uptake system. The chain is Divalent metal cation transporter MntH from Latilactobacillus sakei subsp. sakei (strain 23K) (Lactobacillus sakei subsp. sakei).